Reading from the N-terminus, the 1119-residue chain is Period circadian protein homolog 3 (1119 aa).

Positions 1-48 (MDPCGNPAVPGGDCPQTRGPGLQGSSGQEGPLQGICVDSSHSEHEDRN) are disordered. The Nuclear export signal 1 signature appears at 54-63 (LIMVVQEMKK). 2 consecutive PAS domains span residues 120–187 (LASE…PTQL) and 259–325 (YEAP…KVLK). One can recognise a PAC domain in the interval 334 to 377 (HSPIRFCTQNGDYVILDSSWSSFVNPWSRKVSFIIGRHKVRTSP). The short motif at 400–409 (LQEQIHRLLL) is the Nuclear export signal 3 element. A compositionally biased stretch (low complexity) spans 419 to 428 (GYGSLGSSGS). 4 disordered regions span residues 419–449 (GYGSLGSSGSQEQHISVTSSSESSGHCVEEA), 483–530 (VKPV…SSSY), 718–744 (HSRCAGSERRKHKRKKLPTPVDSSSSS), and 878–910 (LEPTPSDHGPRRVEENWETHSEEEHPFISSRSS). Polar residues-rich tracts occupy residues 429–442 (QEQHISVTSSSESS) and 491–515 (TEPQGSDEQKDFSSSQTLKNKSTDT). The segment at 551–750 (LKRKCISCTN…SSSSAHLCPH (200 aa)) is CSNK1E binding domain. The short motif at 720–739 (RCAGSERRKHKRKKLPTPVD) is the Nuclear localization signal element. Basic and acidic residues predominate over residues 885 to 903 (HGPRRVEENWETHSEEEHP). Serine 907 carries the phosphoserine modification. Residues 913–920 (LQLNLLQE) carry the Nuclear export signal 2 motif. Positions 947 to 1011 (GNSGSRSPPC…QDTHRDRAFS (65 aa)) are disordered. Over residues 970–988 (SPSAAASGSSASSVHGSGS) the composition is skewed to low complexity. A compositionally biased stretch (polar residues) spans 989–1001 (DYTSEVSENGQRS). Residues 1037 to 1119 (ERGRDTVLRE…VQQKTPVEQL (83 aa)) are CRY binding domain.

Homodimer. Component of the circadian core oscillator, which includes the CRY proteins, CLOCK or NPAS2, BMAL1 or BMAL2, CSNK1D and/or CSNK1E, TIMELESS and the PER proteins. Interacts directly with PER1, PER2, CRY1, CRY2, and TIMELESS; interaction with CRY1 and CRY2 is weak and not rhythmic. Interacts with FBXW11 and BTRC. Post-translationally, phosphorylation by CSNK1E is weak and appears to require association with PER1 and translocation to the nucleus. In terms of processing, ubiquitinated.

The protein resides in the cytoplasm. It localises to the nucleus. Originally described as a core component of the circadian clock. The circadian clock, an internal time-keeping system, regulates various physiological processes through the generation of approximately 24 hour circadian rhythms in gene expression, which are translated into rhythms in metabolism and behavior. It is derived from the Latin roots 'circa' (about) and 'diem' (day) and acts as an important regulator of a wide array of physiological functions including metabolism, sleep, body temperature, blood pressure, endocrine, immune, cardiovascular, and renal function. Consists of two major components: the central clock, residing in the suprachiasmatic nucleus (SCN) of the brain, and the peripheral clocks that are present in nearly every tissue and organ system. Both the central and peripheral clocks can be reset by environmental cues, also known as Zeitgebers (German for 'timegivers'). The predominant Zeitgeber for the central clock is light, which is sensed by retina and signals directly to the SCN. The central clock entrains the peripheral clocks through neuronal and hormonal signals, body temperature and feeding-related cues, aligning all clocks with the external light/dark cycle. Circadian rhythms allow an organism to achieve temporal homeostasis with its environment at the molecular level by regulating gene expression to create a peak of protein expression once every 24 hours to control when a particular physiological process is most active with respect to the solar day. Transcription and translation of core clock components (CLOCK, NPAS2, BMAL1, BMAL2, PER1, PER2, PER3, CRY1 and CRY2) plays a critical role in rhythm generation, whereas delays imposed by post-translational modifications (PTMs) are important for determining the period (tau) of the rhythms (tau refers to the period of a rhythm and is the length, in time, of one complete cycle). A diurnal rhythm is synchronized with the day/night cycle, while the ultradian and infradian rhythms have a period shorter and longer than 24 hours, respectively. Disruptions in the circadian rhythms contribute to the pathology of cardiovascular diseases, cancer, metabolic syndromes and aging. A transcription/translation feedback loop (TTFL) forms the core of the molecular circadian clock mechanism. Transcription factors, CLOCK or NPAS2 and BMAL1 or BMAL2, form the positive limb of the feedback loop, act in the form of a heterodimer and activate the transcription of core clock genes and clock-controlled genes (involved in key metabolic processes), harboring E-box elements (5'-CACGTG-3') within their promoters. The core clock genes: PER1/2/3 and CRY1/2 which are transcriptional repressors form the negative limb of the feedback loop and interact with the CLOCK|NPAS2-BMAL1|BMAL2 heterodimer inhibiting its activity and thereby negatively regulating their own expression. This heterodimer also activates nuclear receptors NR1D1, NR1D2, RORA, RORB and RORG, which form a second feedback loop and which activate and repress BMAL1 transcription, respectively. Has a redundant role with the other PER proteins PER1 and PER2 and is not essential for the circadian rhythms maintenance. In contrast, plays an important role in sleep-wake timing and sleep homeostasis probably through the transcriptional regulation of sleep homeostasis-related genes, without influencing circadian parameters. Can bind heme. This Rattus norvegicus (Rat) protein is Period circadian protein homolog 3 (Per3).